The following is a 233-amino-acid chain: 5'-methylthioadenosine/S-adenosylhomocysteine nucleosidase (233 aa).

Glu-12 acts as the Proton acceptor in catalysis. Substrate contacts are provided by residues Gly-78, Ile-152, and 173 to 174; that span reads ME. The active-site Proton donor is the Asp-197.

This sequence belongs to the PNP/UDP phosphorylase family. MtnN subfamily. In terms of assembly, homodimer.

It catalyses the reaction S-adenosyl-L-homocysteine + H2O = S-(5-deoxy-D-ribos-5-yl)-L-homocysteine + adenine. It carries out the reaction S-methyl-5'-thioadenosine + H2O = 5-(methylsulfanyl)-D-ribose + adenine. The enzyme catalyses 5'-deoxyadenosine + H2O = 5-deoxy-D-ribose + adenine. It functions in the pathway amino-acid biosynthesis; L-methionine biosynthesis via salvage pathway; S-methyl-5-thio-alpha-D-ribose 1-phosphate from S-methyl-5'-thioadenosine (hydrolase route): step 1/2. Its function is as follows. Catalyzes the irreversible cleavage of the glycosidic bond in both 5'-methylthioadenosine (MTA) and S-adenosylhomocysteine (SAH/AdoHcy) to adenine and the corresponding thioribose, 5'-methylthioribose and S-ribosylhomocysteine, respectively. Also cleaves 5'-deoxyadenosine, a toxic by-product of radical S-adenosylmethionine (SAM) enzymes, into 5-deoxyribose and adenine. Thus, is required for in vivo function of the radical SAM enzymes biotin synthase and lipoic acid synthase, that are inhibited by 5'-deoxyadenosine accumulation. The polypeptide is 5'-methylthioadenosine/S-adenosylhomocysteine nucleosidase (Yersinia pseudotuberculosis serotype O:1b (strain IP 31758)).